Here is a 503-residue protein sequence, read N- to C-terminus: MLKRFVNSIWEICQKDKFQRFTPVADAIDTFCYEPIHQPSSPPFIRDAVDVKRWMMLVVIALFPATFLAIWNSGVQALVYGSGNAQLMESFLHISGFRSYLSFIFNDIGVFSILWTGCKIFLPLLIISYSVGGVCEVLFAIVRKHKIAEGLLVTGILYPLTLPPTIPYWMAALGIAFGVVVSKELFGGTGMNILNPALSGRAFLFFTFPAKMSGDVWVGSNPTKIKESLLAMNSTAGKSIIDGFSQSTCLQTLNSTAPAVKRVHVDAIASNILQMPHVPTESVIHSQFSIWAESHPGLMLDKLTLEQLQNFVTSPLSEGGLGLLPTQFDSAYSITDVIYGIGKFSSGNLFWGNIIGSLGETSTFACLLGAIFLVVTGIASWRTMVSFGIGAFITAWLFKIFSILIVGKHGAWAPARFFIPAYRQLFLGGLGFGLVFMATDPVSSPTMKLAKWIYGLFIGFMTIVIRLINPAYPEGVMLAILLGNVFAPLLDYFAVRKYRRRRI.

5 helical membrane-spanning segments follow: residues 55–75 (MMLV…NSGV), 94–114 (ISGF…FSIL), 120–140 (IFLP…VLFA), 161–181 (TLPP…GVVV), and 186–206 (FGGT…FLFF). T248 carries the FMN phosphoryl threonine modification. A run of 5 helical transmembrane segments spans residues 361 to 381 (TSTF…IASW), 387 to 407 (FGIG…LIVG), 417 to 437 (FFIP…LVFM), 452 to 472 (WIYG…NPAY), and 475 to 495 (GVML…YFAV).

Belongs to the NqrB/RnfD family. In terms of assembly, composed of six subunits; NqrA, NqrB, NqrC, NqrD, NqrE and NqrF. The cofactor is FMN.

It localises to the cell inner membrane. It catalyses the reaction a ubiquinone + n Na(+)(in) + NADH + H(+) = a ubiquinol + n Na(+)(out) + NAD(+). NQR complex catalyzes the reduction of ubiquinone-1 to ubiquinol by two successive reactions, coupled with the transport of Na(+) ions from the cytoplasm to the periplasm. NqrA to NqrE are probably involved in the second step, the conversion of ubisemiquinone to ubiquinol. The sequence is that of Na(+)-translocating NADH-quinone reductase subunit B from Chlamydia caviae (strain ATCC VR-813 / DSM 19441 / 03DC25 / GPIC) (Chlamydophila caviae).